A 69-amino-acid polypeptide reads, in one-letter code: MKQEFSVKGMSCNHCVARIEEAVGRISGVKKVKVQLKKEKAVVKFDEANVQATEICQAINELGYQAEVI.

Residues 1–67 (MKQEFSVKGM…AINELGYQAE (67 aa)) enclose the HMA domain. Cu cation contacts are provided by Cys-12 and Cys-15.

In terms of assembly, monomer in the absence of copper. Homodimer or homooligomer in the presence of copper ions. Interacts with the copper ATPase CopA. Interacts with CopY via a charge-based interaction.

It localises to the cytoplasm. Acts as a copper chaperone by delivering 2 Cu(+) ions to CopY Zn(2+)-bound form. This transfer results in displacement of zinc and dissociation of CopY from the promoter, allowing transcription of the copYZAB operon. The sequence is that of Copper chaperone CopZ (copZ) from Enterococcus hirae (strain ATCC 9790 / DSM 20160 / JCM 8729 / LMG 6399 / NBRC 3181 / NCIMB 6459 / NCDO 1258 / NCTC 12367 / WDCM 00089 / R).